The following is a 23-amino-acid chain: uncharacterized protein (23 aa).

A helical transmembrane segment spans residues 3–23 (YFFMGISFMVIVWAGTFALMI).

It localises to the cell inner membrane. This is an uncharacterized protein from Escherichia coli (strain K12).